The primary structure comprises 685 residues: Putative lipase ROG1 (685 aa).

Catalysis depends on Ser269, which acts as the Charge relay system.

The protein belongs to the putative lipase ROG1 family.

This chain is Putative lipase ROG1 (ROG1), found in Saccharomyces cerevisiae (strain ATCC 204508 / S288c) (Baker's yeast).